Consider the following 115-residue polypeptide: Protein translation factor SUI1 homolog (115 aa).

It belongs to the SUI1 family.

Functionally, probably involved in translation. This chain is Protein translation factor SUI1 homolog (TIF), found in Zea mays (Maize).